Reading from the N-terminus, the 258-residue chain is Snake venom serine protease KN12 (258 aa).

An N-terminal signal peptide occupies residues 1-18 (MVLIRVLANLLILQLSYA). A propeptide spanning residues 19–24 (QRSSEL) is cleaved from the precursor. One can recognise a Peptidase S1 domain in the interval 25 to 249 (VIGGDECNIN…HLDWIQNIIA (225 aa)). Intrachain disulfides connect Cys-31–Cys-163, Cys-50–Cys-66, Cys-98–Cys-256, Cys-142–Cys-210, Cys-174–Cys-189, and Cys-200–Cys-225. His-65 functions as the Charge relay system in the catalytic mechanism. An N-linked (GlcNAc...) asparagine glycan is attached at Asn-103. Residue Asp-110 is the Charge relay system of the active site. N-linked (GlcNAc...) asparagine glycosylation is found at Asn-121, Asn-122, Asn-154, and Asn-170. Ser-204 functions as the Charge relay system in the catalytic mechanism. Asn-251 is a glycosylation site (N-linked (GlcNAc...) asparagine).

Belongs to the peptidase S1 family. Snake venom subfamily. Monomer. As to expression, expressed by the venom gland.

Its subcellular location is the secreted. Snake venom serine protease that may act in the hemostasis system of the prey. The sequence is that of Snake venom serine protease KN12 from Trimeresurus stejnegeri (Chinese green tree viper).